The primary structure comprises 365 residues: UDP-N-acetylglucosamine--N-acetylmuramyl-(pentapeptide) pyrophosphoryl-undecaprenol N-acetylglucosamine transferase (365 aa).

Residues T10–G12, N124, R161, S195, I248, and Q292 each bind UDP-N-acetyl-alpha-D-glucosamine.

Belongs to the glycosyltransferase 28 family. MurG subfamily.

It is found in the cell membrane. The enzyme catalyses di-trans,octa-cis-undecaprenyl diphospho-N-acetyl-alpha-D-muramoyl-L-alanyl-D-glutamyl-meso-2,6-diaminopimeloyl-D-alanyl-D-alanine + UDP-N-acetyl-alpha-D-glucosamine = di-trans,octa-cis-undecaprenyl diphospho-[N-acetyl-alpha-D-glucosaminyl-(1-&gt;4)]-N-acetyl-alpha-D-muramoyl-L-alanyl-D-glutamyl-meso-2,6-diaminopimeloyl-D-alanyl-D-alanine + UDP + H(+). It functions in the pathway cell wall biogenesis; peptidoglycan biosynthesis. Cell wall formation. Catalyzes the transfer of a GlcNAc subunit on undecaprenyl-pyrophosphoryl-MurNAc-pentapeptide (lipid intermediate I) to form undecaprenyl-pyrophosphoryl-MurNAc-(pentapeptide)GlcNAc (lipid intermediate II). The protein is UDP-N-acetylglucosamine--N-acetylmuramyl-(pentapeptide) pyrophosphoryl-undecaprenol N-acetylglucosamine transferase of Nocardioides sp. (strain ATCC BAA-499 / JS614).